The following is a 212-amino-acid chain: Peptide methionine sulfoxide reductase MsrA (212 aa).

The active site involves cysteine 52.

Belongs to the MsrA Met sulfoxide reductase family.

It carries out the reaction L-methionyl-[protein] + [thioredoxin]-disulfide + H2O = L-methionyl-(S)-S-oxide-[protein] + [thioredoxin]-dithiol. The catalysed reaction is [thioredoxin]-disulfide + L-methionine + H2O = L-methionine (S)-S-oxide + [thioredoxin]-dithiol. Has an important function as a repair enzyme for proteins that have been inactivated by oxidation. Catalyzes the reversible oxidation-reduction of methionine sulfoxide in proteins to methionine. The sequence is that of Peptide methionine sulfoxide reductase MsrA from Salmonella newport (strain SL254).